The chain runs to 158 residues: ATP synthase subunit b', chloroplastic (158 aa).

A helical transmembrane segment spans residues 21–41 (GTLPLMALQFLILMLLLNTIF).

The protein belongs to the ATPase B chain family. In terms of assembly, F-type ATPases have 2 components, F(1) - the catalytic core - and F(0) - the membrane proton channel. F(1) has five subunits: alpha(3), beta(3), gamma(1), delta(1), epsilon(1). F(0) has four main subunits: a(1), b(1), b'(1) and c(10-14). The alpha and beta chains form an alternating ring which encloses part of the gamma chain. F(1) is attached to F(0) by a central stalk formed by the gamma and epsilon chains, while a peripheral stalk is formed by the delta, b and b' chains.

The protein localises to the plastid. The protein resides in the chloroplast thylakoid membrane. Its function is as follows. F(1)F(0) ATP synthase produces ATP from ADP in the presence of a proton or sodium gradient. F-type ATPases consist of two structural domains, F(1) containing the extramembraneous catalytic core and F(0) containing the membrane proton channel, linked together by a central stalk and a peripheral stalk. During catalysis, ATP synthesis in the catalytic domain of F(1) is coupled via a rotary mechanism of the central stalk subunits to proton translocation. In terms of biological role, component of the F(0) channel, it forms part of the peripheral stalk, linking F(1) to F(0). The b'-subunit is a diverged and duplicated form of b found in plants and photosynthetic bacteria. The chain is ATP synthase subunit b', chloroplastic from Porphyra purpurea (Red seaweed).